The following is a 434-amino-acid chain: Tryptophan synthase beta chain (434 aa).

Position 92 is an N6-(pyridoxal phosphate)lysine (Lys-92). The tract at residues 411–434 is disordered; that stretch reads VKGGVATSPESFDASGAKGAGSQS.

The protein belongs to the TrpB family. As to quaternary structure, tetramer of two alpha and two beta chains. Pyridoxal 5'-phosphate is required as a cofactor.

It carries out the reaction (1S,2R)-1-C-(indol-3-yl)glycerol 3-phosphate + L-serine = D-glyceraldehyde 3-phosphate + L-tryptophan + H2O. The protein operates within amino-acid biosynthesis; L-tryptophan biosynthesis; L-tryptophan from chorismate: step 5/5. Its function is as follows. The beta subunit is responsible for the synthesis of L-tryptophan from indole and L-serine. This Polaromonas naphthalenivorans (strain CJ2) protein is Tryptophan synthase beta chain.